Consider the following 563-residue polypeptide: Cytochrome b (563 aa).

Helical transmembrane passes span 36–61, 81–104, 119–141, 193–220, 255–276, 326–345, 358–379, 387–409, 436–454, 458–476, 505–527, and 539–557; these read SYWL…LLYY, SVLL…HMFR, WVTG…SLVS, RLLG…ERYG, LSIV…ANIN, ILTI…LPFL, FWTW…WGYL, TSAQ…YLWP, ILLG…FNFI, TLIN…IYAL, IAFF…MWTL, and MDLG…LYHY. Heme contacts are provided by His-87 and His-101. His-198 and His-212 together coordinate heme.

Belongs to the cytochrome b family. As to quaternary structure, it is a component of at least 2 distinct terminal oxidases, the quinol oxidase (SoxABC) and the alternate quinol oxidase with the core components SoxM and a Rieske Fe-S protein.

The protein resides in the cell membrane. Binds 2 heme groups (b586 and b606) which are not covalently bound to the protein. The chain is Cytochrome b (soxC) from Sulfolobus acidocaldarius (strain ATCC 33909 / DSM 639 / JCM 8929 / NBRC 15157 / NCIMB 11770).